Consider the following 265-residue polypeptide: Lipopolysaccharide core heptose(I) kinase WaaP (265 aa).

Asp162 is an active-site residue.

It belongs to the protein kinase superfamily. KdkA/RfaP family. It depends on Mg(2+) as a cofactor.

The catalysed reaction is an L-alpha-D-Hep-(1-&gt;3)-L-alpha-D-Hep-(1-&gt;5)-[alpha-Kdo-(2-&gt;4)]-alpha-Kdo-(2-&gt;6)-lipid A + ATP = an L-alpha-D-Hep-(1-&gt;3)-4-O-phospho-L-alpha-D-Hep-(1-&gt;5)-[alpha-Kdo-(2-&gt;4)]-alpha-Kdo-(2-&gt;6)-lipid A + ADP + H(+). The enzyme catalyses L-alpha-D-Hep-(1-&gt;3)-L-alpha-D-Hep-(1-&gt;5)-[alpha-Kdo-(2-&gt;4)]-alpha-Kdo-(2-&gt;6)-lipid A (E. coli) + ATP = L-alpha-D-Hep-(1-&gt;3)-4-O-phospho-L-alpha-D-Hep-(1-&gt;5)-[alpha-Kdo-(2-&gt;4)]-alpha-Kdo-(2-&gt;6)-lipid A (E. coli) + ADP + H(+). It participates in bacterial outer membrane biogenesis; LPS core biosynthesis. Its function is as follows. Kinase involved in the biosynthesis of the core oligosaccharide region of lipopolysaccharide (LPS). Catalyzes the phosphorylation of heptose I (HepI), the first heptose added to the Kdo2-lipid A module. This chain is Lipopolysaccharide core heptose(I) kinase WaaP, found in Escherichia coli (strain K12).